The chain runs to 138 residues: Cellular retinoic acid-binding protein 2 (138 aa).

Residues 21–31 (KALGVNMMMRK) carry the Nuclear localization signal motif. Lysine 102 participates in a covalent cross-link: Glycyl lysine isopeptide (Lys-Gly) (interchain with G-Cter in SUMO). 133 to 135 (RVY) serves as a coordination point for all-trans-retinoate.

It belongs to the calycin superfamily. Fatty-acid binding protein (FABP) family. As to quaternary structure, interacts with importin alpha. Interacts with RXR and RARA. Sumoylated in response to retinoic acid binding, sumoylation is critical for dissociation from ER and subsequent nuclear translocation. In terms of tissue distribution, embryo and skin of adult mouse.

The protein localises to the cytoplasm. Its subcellular location is the endoplasmic reticulum. It is found in the nucleus. Transports retinoic acid to the nucleus. Regulates the access of retinoic acid to the nuclear retinoic acid receptors. The chain is Cellular retinoic acid-binding protein 2 (Crabp2) from Mus musculus (Mouse).